The primary structure comprises 184 residues: Lactoylglutathione lyase (184 aa).

Alanine 2 carries the N-acetylalanine modification. Cysteine 19 and cysteine 20 are disulfide-bonded. One can recognise a VOC domain in the interval 31–177; sequence LLQQTMLRVK…DGYWIEILNP (147 aa). Substrate-binding residues include glutamine 34 and arginine 38. Residue glutamine 34 participates in Zn(2+) binding. Cysteine 61 and cysteine 139 are disulfide-bonded. The residue at position 88 (lysine 88) is an N6-succinyllysine. Position 100 (glutamate 100) interacts with Zn(2+). Residue asparagine 104 coordinates substrate. Threonine 107 carries the phosphothreonine modification. Substrate contacts are provided by arginine 123 and histidine 127. Residue histidine 127 coordinates Zn(2+). Residue cysteine 139 is modified to S-glutathionyl cysteine; alternate. Lysine 148 is modified (N6-acetyllysine; alternate). Lysine 148 carries the post-translational modification N6-succinyllysine; alternate. 157-158 provides a ligand contact to substrate; that stretch reads KM. Residue glutamate 173 coordinates Zn(2+). Glutamate 173 functions as the Proton donor/acceptor in the catalytic mechanism.

The protein belongs to the glyoxalase I family. Homodimer. The cofactor is Zn(2+). Glutathionylation at Cys-139 inhibits enzyme activity. Post-translationally, phosphorylated at Thr-107 in the presence of CaMK2. However, this is a consensus site for phosphorylation by CK2 so phosphorylation may be mediated by CK2 rather than CaMK2. Phosphorylation is induced by TNF and suppresses the TNF-induced transcriptional activity of NF-kappa-B. In terms of processing, exists in a nitric oxide (NO)-modified form. The exact nature of the modification is unknown, but it suppresses the TNF-induced transcriptional activity of NF-kappa-B.

The enzyme catalyses (R)-S-lactoylglutathione = methylglyoxal + glutathione. Its pathway is secondary metabolite metabolism; methylglyoxal degradation; (R)-lactate from methylglyoxal: step 1/2. With respect to regulation, regulated by oxidation of Cys-139 in response to the redox state of the cell. Results in the alternative formation of cystine or glutathione-bound cysteine, the latter modification leading to reduced enzyme activity. Its function is as follows. Catalyzes the conversion of hemimercaptal, formed from methylglyoxal and glutathione, to S-lactoylglutathione. Involved in the regulation of TNF-induced transcriptional activity of NF-kappa-B. Required for normal osteoclastogenesis. This is Lactoylglutathione lyase (GLO1) from Homo sapiens (Human).